The following is a 272-amino-acid chain: 1,4-dihydroxy-2-naphthoyl-CoA synthase (272 aa).

Substrate-binding positions include Arg-33, 72 to 76 (SGGDQ), Tyr-84, 116 to 120 (YAIGG), Thr-142, Ser-148, Tyr-245, and Lys-260. 141-143 (QTG) is a binding site for hydrogencarbonate. A compositionally biased stretch (basic and acidic residues) spans 253–264 (GRDAFKEKRDPD). Positions 253-272 (GRDAFKEKRDPDFDQFPKFP) are disordered.

It belongs to the enoyl-CoA hydratase/isomerase family. MenB subfamily. The cofactor is hydrogencarbonate.

It carries out the reaction 2-succinylbenzoyl-CoA + H(+) = 1,4-dihydroxy-2-naphthoyl-CoA + H2O. It functions in the pathway quinol/quinone metabolism; 1,4-dihydroxy-2-naphthoate biosynthesis; 1,4-dihydroxy-2-naphthoate from chorismate: step 6/7. Its pathway is quinol/quinone metabolism; menaquinone biosynthesis. Its function is as follows. Converts o-succinylbenzoyl-CoA (OSB-CoA) to 1,4-dihydroxy-2-naphthoyl-CoA (DHNA-CoA). The protein is 1,4-dihydroxy-2-naphthoyl-CoA synthase of Staphylococcus haemolyticus (strain JCSC1435).